A 152-amino-acid chain; its full sequence is Lipoprotein signal peptidase (152 aa).

A run of 3 helical transmembrane segments spans residues Leu-5–Val-25, Trp-61–His-81, and Leu-84–Ile-104. Residues Asp-114 and Asp-130 contribute to the active site. A helical membrane pass occupies residues Ile-125–Trp-145.

Belongs to the peptidase A8 family.

The protein localises to the cell membrane. The catalysed reaction is Release of signal peptides from bacterial membrane prolipoproteins. Hydrolyzes -Xaa-Yaa-Zaa-|-(S,diacylglyceryl)Cys-, in which Xaa is hydrophobic (preferably Leu), and Yaa (Ala or Ser) and Zaa (Gly or Ala) have small, neutral side chains.. The protein operates within protein modification; lipoprotein biosynthesis (signal peptide cleavage). This protein specifically catalyzes the removal of signal peptides from prolipoproteins. The protein is Lipoprotein signal peptidase of Streptococcus pyogenes serotype M2 (strain MGAS10270).